The primary structure comprises 139 residues: Ribonuclease P protein component (139 aa).

This sequence belongs to the RnpA family. In terms of assembly, consists of a catalytic RNA component (M1 or rnpB) and a protein subunit.

It catalyses the reaction Endonucleolytic cleavage of RNA, removing 5'-extranucleotides from tRNA precursor.. Its function is as follows. RNaseP catalyzes the removal of the 5'-leader sequence from pre-tRNA to produce the mature 5'-terminus. It can also cleave other RNA substrates such as 4.5S RNA. The protein component plays an auxiliary but essential role in vivo by binding to the 5'-leader sequence and broadening the substrate specificity of the ribozyme. The sequence is that of Ribonuclease P protein component from Paraburkholderia xenovorans (strain LB400).